The following is a 143-amino-acid chain: Protein STIG1 (143 aa).

Residues M1 to G23 form the signal peptide. The interval R76–L87 is sufficient for PI(4)P binding. A sufficient for binding to the extracellular domain of PRK2 region spans residues F80–F83. Residues F88–I115 form a sufficient for PI(3)P binding region.

The protein belongs to the STIG1 family. As to quaternary structure, interacts with PRK1 and PRK2 (via extracellular domain). Expressed in the stigma and the upper section of the style.

It is found in the secreted. It localises to the extracellular space. The protein localises to the apoplast. In terms of biological role, promotes pollen tube growth. A C-terminal peptide is cleaved from the propeptide in the stigmatic exudate and represent the major form of STIG1. Binds phosphoinositol lipids. The binding of external phosphatidylinositol 3-phosphate (PI(3)P) and PRK2 by STIG1 induces a rapid intracellular reactive oxygen species elevation. This Solanum lycopersicum (Tomato) protein is Protein STIG1.